The sequence spans 182 residues: Keratin, type II cytoskeletal 60 kDa, component III (182 aa).

One can recognise an IF rod domain in the interval 1–63; the sequence is ERGELALKDA…KLLEGEECRL (63 aa). The coil 2 stretch occupies residues 1 to 63; it reads ERGELALKDA…KLLEGEECRL (63 aa). The interval 63-182 is tail; the sequence is LSGEGVGPVN…TSSSRKSFKS (120 aa). The tract at residues 157-182 is disordered; sequence FGSGGGSSSSVKFVSTTSSSRKSFKS. The span at 164–182 shows a compositional bias: low complexity; the sequence is SSSVKFVSTTSSSRKSFKS.

Belongs to the intermediate filament family. Heterotetramer of two type I and two type II keratins.

This chain is Keratin, type II cytoskeletal 60 kDa, component III, found in Bos taurus (Bovine).